The following is a 346-amino-acid chain: MIKVGIIGSTGYAGQELVRILLQHKEVSIVWYGSKSYIDKKYSEVFQNMFQIVEESCFDDNMEELARHVDVIFTATPQGFCASVMTEDILSKVKVIDLSADYRIKDVKTYEEWYGIKHNSPDFLKEAVYGLCEFNREDIKKARLIANPGCYPTCSILSIYPLIKEGIIETDSIIIDAKSGVSGAGRGAKVDNLYCEVNENMKAYGVSTHRHTPEIEEQFSLITLENVTINFTPHLVPMNRGILITAYGKLKKRVSYEEVKEIYDRYYEKEYFVRVLEKGMPPETRWVEGSNFVDVNFVIDNRTNRIIMMGAMDNLVKGAAGQAVQNMNLMFGLPEQEGLKLVPMFP.

C150 is a catalytic residue.

Belongs to the NAGSA dehydrogenase family. Type 1 subfamily.

The protein localises to the cytoplasm. The enzyme catalyses N-acetyl-L-glutamate 5-semialdehyde + phosphate + NADP(+) = N-acetyl-L-glutamyl 5-phosphate + NADPH + H(+). It participates in amino-acid biosynthesis; L-arginine biosynthesis; N(2)-acetyl-L-ornithine from L-glutamate: step 3/4. Functionally, catalyzes the NADPH-dependent reduction of N-acetyl-5-glutamyl phosphate to yield N-acetyl-L-glutamate 5-semialdehyde. This Lachnoclostridium phytofermentans (strain ATCC 700394 / DSM 18823 / ISDg) (Clostridium phytofermentans) protein is N-acetyl-gamma-glutamyl-phosphate reductase.